The sequence spans 717 residues: RNA helicase NPH-II (717 aa).

The region spanning Phe-193 to Tyr-384 is the Helicase ATP-binding domain. ATP is bound at residue Gly-206–Thr-213. A DEXH box motif is present at residues Asp-331 to His-334. The Helicase C-terminal domain maps to Ile-406–Tyr-566.

Belongs to the DEAD box helicase family. DEAH subfamily. Monomer.

The protein localises to the virion. It catalyses the reaction ATP + H2O = ADP + phosphate + H(+). Functionally, NTP-dependent helicase that catalyzes unidirectional unwinding of 3'tailed duplex RNAs and plays an important role during transcription of early mRNAs, presumably by preventing R-loop formation behind the elongating RNA polymerase. Might also play a role in the export of newly synthesized mRNA chains out of the core into the cytoplasm. Required for replication and propagation of viral particles. In Melanoplus sanguinipes (Migratory grasshopper), this protein is RNA helicase NPH-II (NPH2).